The primary structure comprises 388 residues: Diphosphomevalonate decarboxylase (388 aa).

(R)-5-diphosphomevalonate-binding positions include Tyr19 to Lys22, Arg74, Ser153 to Arg158, and Thr209. The interval Gln367–Asn388 is disordered.

The protein belongs to the diphosphomevalonate decarboxylase family. As to quaternary structure, homodimer.

It catalyses the reaction (R)-5-diphosphomevalonate + ATP = isopentenyl diphosphate + ADP + phosphate + CO2. Its pathway is isoprenoid biosynthesis; isopentenyl diphosphate biosynthesis via mevalonate pathway; isopentenyl diphosphate from (R)-mevalonate: step 3/3. Its function is as follows. Diphosphomevalonate decarboxylase; part of the second module of ergosterol biosynthesis pathway that includes the middle steps of the pathway. The second module is carried out in the vacuole and involves the formation of farnesyl diphosphate, which is also an important intermediate in the biosynthesis of ubiquinone, dolichol, heme and prenylated proteins. Activity by the mevalonate kinase ERG12 first converts mevalonate into 5-phosphomevalonate. 5-phosphomevalonate is then further converted to 5-diphosphomevalonate by the phosphomevalonate kinase ERG8. The diphosphomevalonate decarboxylase MVD1/ERG19 then produces isopentenyl diphosphate. The isopentenyl-diphosphate delta-isomerase IDI1 then catalyzes the 1,3-allylic rearrangement of the homoallylic substrate isopentenyl (IPP) to its highly electrophilic allylic isomer, dimethylallyl diphosphate (DMAPP). Finally the farnesyl diphosphate synthase ERG20 catalyzes the sequential condensation of isopentenyl pyrophosphate with dimethylallyl pyrophosphate, and then with the resultant geranylpyrophosphate to the ultimate product farnesyl pyrophosphate. The polypeptide is Diphosphomevalonate decarboxylase (Debaryomyces hansenii (strain ATCC 36239 / CBS 767 / BCRC 21394 / JCM 1990 / NBRC 0083 / IGC 2968) (Yeast)).